Consider the following 1031-residue polypeptide: Ookinete maturation protein 1 (1031 aa).

Disordered stretches follow at residues 125–184 (HNEN…PELE), 340–405 (KEAE…DGMR), and 609–697 (DAEL…NDSI). Over residues 141–168 (QKLKKKKKIKKGTKKKSINKISILKHKS) the composition is skewed to basic residues. Positions 171 to 180 (SFPSTQNENT) are enriched in polar residues. Residues 340–357 (KEAEEEERKKNEDEHILE) are compositionally biased toward basic and acidic residues. A compositionally biased stretch (polar residues) spans 377 to 394 (LGKSFKNNESFELNSPQK). Positions 581 to 646 (IDEENSVFVE…ETQMAGKEEK (66 aa)) form a coiled coil. Residues 610–648 (AELRKDEEEDKSKNNEKDSKSEERDILETQMAGKEEKPV) are compositionally biased toward basic and acidic residues. The span at 649 to 659 (LKKKKKNKGKQ) shows a compositional bias: basic residues. Basic and acidic residues predominate over residues 660-686 (RNREGKGVVEKGYDAKREKKENEEKNK).

Its function is as follows. In the mosquito vector midgut, plays a role in ookinete development. This Plasmodium berghei (strain Anka) protein is Ookinete maturation protein 1.